The primary structure comprises 70 residues: Putative membrane protein insertion efficiency factor (70 aa).

Belongs to the UPF0161 family.

It is found in the cell membrane. Functionally, could be involved in insertion of integral membrane proteins into the membrane. The chain is Putative membrane protein insertion efficiency factor from Rubrobacter xylanophilus (strain DSM 9941 / JCM 11954 / NBRC 16129 / PRD-1).